Consider the following 132-residue polypeptide: D-ribose pyranase (132 aa).

His-20 serves as the catalytic Proton donor. Substrate-binding positions include Asp-28, His-99, and 121–123 (YSN).

The protein belongs to the RbsD / FucU family. RbsD subfamily. In terms of assembly, homodecamer.

The protein resides in the cytoplasm. The enzyme catalyses beta-D-ribopyranose = beta-D-ribofuranose. The protein operates within carbohydrate metabolism; D-ribose degradation; D-ribose 5-phosphate from beta-D-ribopyranose: step 1/2. Functionally, catalyzes the interconversion of beta-pyran and beta-furan forms of D-ribose. The polypeptide is D-ribose pyranase (Streptococcus agalactiae serotype III (strain NEM316)).